A 196-amino-acid polypeptide reads, in one-letter code: Protein hunchback (196 aa).

Disordered regions lie at residues 16-60 (SHHH…NTNL) and 90-196 (AMTP…KYMA). The segment covering 17 to 30 (HHHHHHHAHHSYHQ) has biased composition (basic residues). The span at 92 to 103 (TPSSSNNDQNSP) shows a compositional bias: polar residues. A compositionally biased stretch (low complexity) spans 125 to 144 (PTATTTTTPAAAAPTTTAAT). The span at 176–196 (AEREKEHDLMSNSSEDMKYMA) shows a compositional bias: basic and acidic residues.

Belongs to the hunchback C2H2-type zinc-finger protein family.

Its subcellular location is the nucleus. Functionally, gap class segmentation protein that controls development of head structures. This Drosophila silvestris (Fruit fly) protein is Protein hunchback (hb).